Reading from the N-terminus, the 365-residue chain is G-protein coupled receptor 68 (365 aa).

The Extracellular segment spans residues 1 to 12 (MGNITADNSSMS). Residues asparagine 3 and asparagine 8 are each glycosylated (N-linked (GlcNAc...) asparagine). A helical membrane pass occupies residues 13–49 (CTIDHTIHQTLAPVVYVTVLVVGFPANCLSLYFGYLQ). 2 disulfide bridges follow: cysteine 13–cysteine 258 and cysteine 94–cysteine 172. Topologically, residues 50–53 (IKAR) are cytoplasmic. Residues 54-84 (NELGVYLCNLTVADLFYICSLPFWLQYVLQH) traverse the membrane as a helical segment. The Extracellular portion of the chain corresponds to 85-89 (DNWSH). Residues 90-125 (GDLSCQVCGILLYENIYISVGFLCCISVDRYLAVAH) form a helical membrane-spanning segment. The Cytoplasmic segment spans residues 126–133 (PFRFHQFR). The chain crosses the membrane as a helical span at residues 134–160 (TLKAAVGVSVVIWAKELLTSIYFLMHE). Residues 161–176 (EVIEDENQHRVCFEHY) lie on the Extracellular side of the membrane. The tract at residues 161–176 (EVIEDENQHRVCFEHY) is extracellular loop 2 (ECL2). A helical transmembrane segment spans residues 177–214 (PIQAWQRAINYYRFLVGFLFPICLLLASYQGILRAVRR). Over 215–218 (SHGT) the chain is Cytoplasmic. The chain crosses the membrane as a helical span at residues 219–254 (QKSRKDQIQRLVLSTVVIFLACFLPYHVLLLVRSVW). The Extracellular portion of the chain corresponds to 255 to 260 (EASCDF). Residues 261–289 (AKGVFNAYHFSLLLTSFNCVADPVLYCFV) form a helical membrane-spanning segment. The Cytoplasmic portion of the chain corresponds to 290-365 (SETTHRDLAR…SGGFPTGRLA (76 aa)). The tract at residues 345–365 (HPAFQTPNSPGSGGFPTGRLA) is disordered. Positions 355–365 (GSGGFPTGRLA) are enriched in gly residues.

This sequence belongs to the G-protein coupled receptor 1 family. As to expression, found at low level in a wide range of tissues, but significantly expressed in lung, kidney, bone and nervous system.

It localises to the cell membrane. Activated by a network of residues that connects an extracellular-facing cavity to Glu-149, a conserved charged residue buried in the transmembrane core of the receptor. Protonation likely drives conformational changes in extracellular loop 2 (ECL2), which stabilizes movement of transmembrane 3 (TM3) and a series of rearrangements that connect the extracellular-facing cavity to Glu-149, a residue only conserved in proton-sensing G-protein coupled receptors. Activated in an allosteric manner by divalent metal ions at the extracellular surface following the order: Cd(2+) &gt; Co(2+) &gt; Ni(2+) &gt; Zn(2+) &gt; Fe(2+) &gt; Ca(2+) &gt; Mg(2+). Activated by the benzodiazepine drug lorazepam, a non-selective GPR68 positive allosteric modulator. Activated by ogerin (ZINC67740571), a selective GPR68 positive allosteric modulator. Activated by small molecule MS48107, a selective positive allosteric modulator. Inhibited by small molecule ogremorphin, inducing ferroptosis in cancer cells. In terms of biological role, proton-sensing G-protein coupled receptor activated by extracellular pH, which is required to monitor pH changes and generate adaptive reactions. The receptor is almost silent at pH 7.8 but fully activated at pH 6.8. Ligand binding causes a conformation change that triggers signaling via guanine nucleotide-binding proteins (G proteins) and modulates the activity of downstream effectors, such as phospholipase C. GPR68 is mainly coupled to G(q) G proteins and mediates production of diacylglycerol (DAG) and inositol 1,4,5-trisphosphate (IP3). Acts as a key mechanosensor of fluid shear stress and membrane stretch. Expressed in endothelial cells of small-diameter resistance arteries, where it mediates flow-induced dilation in response to shear stress. May represents an osteoblastic pH sensor regulating cell-mediated responses to acidosis in bone. Acts as a regulator of calcium-sensing receptor CASR in a seesaw manner: GPR68-mediated signaling inhibits CASR signaling in response to protons, while CASR inhibits GPR68 in presence of extracellular calcium. This Homo sapiens (Human) protein is G-protein coupled receptor 68.